Consider the following 496-residue polypeptide: Zinc finger protein PLAGL2 (496 aa).

6 consecutive C2H2-type zinc fingers follow at residues 68–92, 98–120, 127–149, 156–178, 191–213, and 219–242; these read YSCP…MATH, HQCM…LQTH, LHCS…LAMH, LSCK…LKAH, HPCD…LVVH, and FLCQ…KKSH.

This sequence belongs to the krueppel C2H2-type zinc-finger protein family.

It is found in the nucleus. Functionally, shows weak transcriptional activatory activity. This Homo sapiens (Human) protein is Zinc finger protein PLAGL2 (PLAGL2).